A 159-amino-acid chain; its full sequence is Phosphopantetheine adenylyltransferase (159 aa).

Thr10 contributes to the substrate binding site. ATP contacts are provided by residues 10–11 (TF) and His18. Residues Lys42, Leu74, and Arg88 each contribute to the substrate site. ATP contacts are provided by residues 89–91 (GLR), Glu99, and 124–130 (YSFISSS).

Belongs to the bacterial CoaD family. As to quaternary structure, homohexamer. Requires Mg(2+) as cofactor.

Its subcellular location is the cytoplasm. The enzyme catalyses (R)-4'-phosphopantetheine + ATP + H(+) = 3'-dephospho-CoA + diphosphate. It participates in cofactor biosynthesis; coenzyme A biosynthesis; CoA from (R)-pantothenate: step 4/5. Functionally, reversibly transfers an adenylyl group from ATP to 4'-phosphopantetheine, yielding dephospho-CoA (dPCoA) and pyrophosphate. This is Phosphopantetheine adenylyltransferase from Campylobacter hominis (strain ATCC BAA-381 / DSM 21671 / CCUG 45161 / LMG 19568 / NCTC 13146 / CH001A).